The primary structure comprises 483 residues: Aspartyl/glutamyl-tRNA(Asn/Gln) amidotransferase subunit B (483 aa).

Belongs to the GatB/GatE family. GatB subfamily. In terms of assembly, heterotrimer of A, B and C subunits.

The catalysed reaction is L-glutamyl-tRNA(Gln) + L-glutamine + ATP + H2O = L-glutaminyl-tRNA(Gln) + L-glutamate + ADP + phosphate + H(+). The enzyme catalyses L-aspartyl-tRNA(Asn) + L-glutamine + ATP + H2O = L-asparaginyl-tRNA(Asn) + L-glutamate + ADP + phosphate + 2 H(+). In terms of biological role, allows the formation of correctly charged Asn-tRNA(Asn) or Gln-tRNA(Gln) through the transamidation of misacylated Asp-tRNA(Asn) or Glu-tRNA(Gln) in organisms which lack either or both of asparaginyl-tRNA or glutaminyl-tRNA synthetases. The reaction takes place in the presence of glutamine and ATP through an activated phospho-Asp-tRNA(Asn) or phospho-Glu-tRNA(Gln). In Granulibacter bethesdensis (strain ATCC BAA-1260 / CGDNIH1), this protein is Aspartyl/glutamyl-tRNA(Asn/Gln) amidotransferase subunit B.